The sequence spans 234 residues: Large ribosomal subunit protein uL1 (234 aa).

The protein belongs to the universal ribosomal protein uL1 family. As to quaternary structure, part of the 50S ribosomal subunit.

In terms of biological role, binds directly to 23S rRNA. The L1 stalk is quite mobile in the ribosome, and is involved in E site tRNA release. Its function is as follows. Protein L1 is also a translational repressor protein, it controls the translation of the L11 operon by binding to its mRNA. The polypeptide is Large ribosomal subunit protein uL1 (Bartonella tribocorum (strain CIP 105476 / IBS 506)).